The primary structure comprises 230 residues: Acyl-protein thioesterase 1 (230 aa).

Residues S119, D174, and H208 each act as charge relay system in the active site. K224 carries the post-translational modification N6-acetyllysine.

It belongs to the AB hydrolase superfamily. AB hydrolase 2 family. In terms of assembly, homodimer.

It is found in the cytoplasm. It localises to the cell membrane. The protein localises to the nucleus membrane. Its subcellular location is the endoplasmic reticulum. It catalyses the reaction S-hexadecanoyl-L-cysteinyl-[protein] + H2O = L-cysteinyl-[protein] + hexadecanoate + H(+). The enzyme catalyses 1-hexadecanoyl-sn-glycero-3-phosphocholine + H2O = sn-glycerol 3-phosphocholine + hexadecanoate + H(+). It carries out the reaction a 1-(9Z-octadecenoyl)-2-acyl-sn-glycero-3-phosphocholine + H2O = a 2-acyl-sn-glycero-3-phosphocholine + (9Z)-octadecenoate + H(+). Its function is as follows. Acts as an acyl-protein thioesterase. Hydrolyzes fatty acids from S-acylated cysteine residues in proteins such as trimeric G alpha proteins or HRAS. Acts as a palmitoyl thioesterase that catalyzes depalmitoylation of proteins, such as ADRB2, KCNMA1 and SQSTM1. Acts as a negative regulator of autophagy by mediating palmitoylation of SQSTM1, decreasing affinity between SQSTM1 and ATG8 proteins and recruitment of ubiquitinated cargo proteins to autophagosomes. Acts as a lysophospholipase and hydrolyzes lysophosphatidylcholine (lyso-PC). Also hydrolyzes lysophosphatidylethanolamine (lyso-PE), lysophosphatidylinositol (lyso-PI) and lysophosphatidylserine (lyso-PS). Has much higher thioesterase activity than lysophospholipase activity. Contributes to the production of lysophosphatidic acid (LPA) during blood coagulation by recognizing and cleaving plasma phospholipids to generate lysophospholipids which in turn act as substrates for ENPP2 to produce LPA. The polypeptide is Acyl-protein thioesterase 1 (LYPLA1) (Pongo abelii (Sumatran orangutan)).